Here is a 416-residue protein sequence, read N- to C-terminus: Trifolitoxin-processing protein TfxD (416 aa).

11 helical membrane passes run 24–44 (MIPN…ALQV), 48–68 (VLIT…LICM), 79–99 (VFAA…ALIA), 114–134 (IAFI…AYCA), 153–173 (SSLI…FAGT), 176–196 (SIIS…LAYA), 230–250 (ASFI…VVAA), 255–275 (IAVF…LAIG), 295–315 (VLIA…VGLI), 322–342 (IFAL…CDGL), and 372–392 (VILA…ALVL).

It localises to the cell membrane. Functionally, the actions of the proteins TfxB, TfxD and TfxF are implicated in the processing of the inactive trifolitoxin (TfxA) precursor into the active peptide. The chain is Trifolitoxin-processing protein TfxD (tfxD) from Rhizobium leguminosarum bv. trifolii.